Consider the following 393-residue polypeptide: NAD(P)H-quinone oxidoreductase subunit H, chloroplastic (393 aa).

It belongs to the complex I 49 kDa subunit family. In terms of assembly, NDH is composed of at least 16 different subunits, 5 of which are encoded in the nucleus.

The protein localises to the plastid. Its subcellular location is the chloroplast thylakoid membrane. The enzyme catalyses a plastoquinone + NADH + (n+1) H(+)(in) = a plastoquinol + NAD(+) + n H(+)(out). It catalyses the reaction a plastoquinone + NADPH + (n+1) H(+)(in) = a plastoquinol + NADP(+) + n H(+)(out). NDH shuttles electrons from NAD(P)H:plastoquinone, via FMN and iron-sulfur (Fe-S) centers, to quinones in the photosynthetic chain and possibly in a chloroplast respiratory chain. The immediate electron acceptor for the enzyme in this species is believed to be plastoquinone. Couples the redox reaction to proton translocation, and thus conserves the redox energy in a proton gradient. This chain is NAD(P)H-quinone oxidoreductase subunit H, chloroplastic, found in Zea mays (Maize).